A 358-amino-acid chain; its full sequence is DNA polymerase IV (358 aa).

Residues 4-185 (IIHIDMDCYF…LPLIKIPGVG (182 aa)) enclose the UmuC domain. Mg(2+)-binding residues include Asp-8 and Asp-103. Glu-104 is a catalytic residue.

It belongs to the DNA polymerase type-Y family. In terms of assembly, monomer. Mg(2+) is required as a cofactor.

Its subcellular location is the cytoplasm. It carries out the reaction DNA(n) + a 2'-deoxyribonucleoside 5'-triphosphate = DNA(n+1) + diphosphate. Functionally, poorly processive, error-prone DNA polymerase involved in untargeted mutagenesis. Copies undamaged DNA at stalled replication forks, which arise in vivo from mismatched or misaligned primer ends. These misaligned primers can be extended by PolIV. Exhibits no 3'-5' exonuclease (proofreading) activity. May be involved in translesional synthesis, in conjunction with the beta clamp from PolIII. The protein is DNA polymerase IV of Shewanella denitrificans (strain OS217 / ATCC BAA-1090 / DSM 15013).